Consider the following 584-residue polypeptide: Putative sel1-like repeat-containing protein L18 (584 aa).

Sel1-like repeat units lie at residues 132 to 167 (SMAQ…DQNN), 168 to 203 (KYGL…CQNF), 204 to 237 (SKAQ…NQNH), 238 to 273 (SSAQ…SQGL), 274 to 309 (NSAK…YDDG), and 316 to 351 (EVAM…NTKN).

The protein is Putative sel1-like repeat-containing protein L18 of Acanthamoeba polyphaga (Amoeba).